Consider the following 642-residue polypeptide: Threonine--tRNA ligase (642 aa).

In terms of domain architecture, TGS spans 1-61 (MPVITLPDGS…DTDSELSIIT (61 aa)). The tract at residues 243–534 (DHRKIGKQLD…LIEEYAGKFP (292 aa)) is catalytic. Positions 334, 385, and 511 each coordinate Zn(2+).

Belongs to the class-II aminoacyl-tRNA synthetase family. In terms of assembly, homodimer. The cofactor is Zn(2+).

The protein localises to the cytoplasm. It catalyses the reaction tRNA(Thr) + L-threonine + ATP = L-threonyl-tRNA(Thr) + AMP + diphosphate + H(+). Functionally, catalyzes the attachment of threonine to tRNA(Thr) in a two-step reaction: L-threonine is first activated by ATP to form Thr-AMP and then transferred to the acceptor end of tRNA(Thr). Also edits incorrectly charged L-seryl-tRNA(Thr). The protein is Threonine--tRNA ligase of Shewanella sediminis (strain HAW-EB3).